The chain runs to 107 residues: N(4)-acetylcytidine amidohydrolase (107 aa).

One can recognise an ASCH domain in the interval 6–102 (TFYRRFQADI…RLYVISFSLV (97 aa)). Lys20 serves as the catalytic Proton acceptor. The Nucleophile role is filled by Thr23. Glu73 serves as the catalytic Proton donor.

The protein belongs to the N(4)-acetylcytidine amidohydrolase family.

The enzyme catalyses N(4)-acetylcytidine + H2O = cytidine + acetate + H(+). The catalysed reaction is N(4)-acetyl-2'-deoxycytidine + H2O = 2'-deoxycytidine + acetate + H(+). It carries out the reaction N(4)-acetylcytosine + H2O = cytosine + acetate + H(+). Its function is as follows. Catalyzes the hydrolysis of N(4)-acetylcytidine (ac4C). The protein is N(4)-acetylcytidine amidohydrolase of Edwardsiella ictaluri (strain 93-146).